A 372-amino-acid polypeptide reads, in one-letter code: Lipid-A-disaccharide synthase (372 aa).

It belongs to the LpxB family.

The enzyme catalyses a lipid X + a UDP-2-N,3-O-bis[(3R)-3-hydroxyacyl]-alpha-D-glucosamine = a lipid A disaccharide + UDP + H(+). Its pathway is bacterial outer membrane biogenesis; LPS lipid A biosynthesis. Its function is as follows. Condensation of UDP-2,3-diacylglucosamine and 2,3-diacylglucosamine-1-phosphate to form lipid A disaccharide, a precursor of lipid A, a phosphorylated glycolipid that anchors the lipopolysaccharide to the outer membrane of the cell. This is Lipid-A-disaccharide synthase from Thiobacillus denitrificans (strain ATCC 25259 / T1).